Consider the following 138-residue polypeptide: Large ribosomal subunit protein uL16 (138 aa).

Belongs to the universal ribosomal protein uL16 family. Part of the 50S ribosomal subunit.

Its function is as follows. Binds 23S rRNA and is also seen to make contacts with the A and possibly P site tRNAs. This is Large ribosomal subunit protein uL16 from Ureaplasma urealyticum serovar 10 (strain ATCC 33699 / Western).